The chain runs to 333 residues: Cytochrome f (333 aa).

The signal sequence occupies residues 1-44 (MRNACTRARLTRTARAMVKTLFIAIASVTFFFTSDLALPQSAAA). Heme contacts are provided by Tyr45, Cys66, Cys69, and His70. The helical transmembrane segment at 299-318 (VGWLIAFVALVMLAQVMLVL) threads the bilayer.

Belongs to the cytochrome f family. The 4 large subunits of the cytochrome b6-f complex are cytochrome b6, subunit IV (17 kDa polypeptide, PetD), cytochrome f and the Rieske protein, while the 4 small subunits are PetG, PetL, PetM and PetN. The complex functions as a dimer. Requires heme as cofactor.

It localises to the cellular thylakoid membrane. Component of the cytochrome b6-f complex, which mediates electron transfer between photosystem II (PSII) and photosystem I (PSI), cyclic electron flow around PSI, and state transitions. This is Cytochrome f from Nostoc sp. (strain PCC 7120 / SAG 25.82 / UTEX 2576).